The primary structure comprises 150 residues: Cdc42 effector protein 5 (150 aa).

Disordered regions lie at residues 1-20 (MPVM…DRGA), 34-89 (LHVG…PADP), and 114-133 (SETT…QHPK). The region spanning 23-37 (ISAPLGDFRHTLHVG) is the CRIB domain. Arginine 38 bears the Omega-N-methylarginine mark. 2 stretches are compositionally biased toward pro residues: residues 55 to 66 (GPPPEPGAPPVV) and 74 to 87 (PAAP…PSPA). The segment covering 114–127 (SETTATKPDGDAHP) has biased composition (basic and acidic residues).

Belongs to the BORG/CEP family. In terms of assembly, interacts with CDC42 in a GTP-dependent manner, and with SEPT7. Highly expressed in the skeletal muscle.

It localises to the endomembrane system. It is found in the cytoplasm. The protein resides in the cytoskeleton. Its function is as follows. Probably involved in the organization of the actin cytoskeleton. May act downstream of CDC42 to induce actin filament assembly leading to cell shape changes. Induces pseudopodia formation in fibroblasts. Inhibits MAPK8 independently of CDC42 binding. Controls septin organization and this effect is negatively regulated by CDC42. This is Cdc42 effector protein 5 (Cdc42ep5) from Mus musculus (Mouse).